Reading from the N-terminus, the 561-residue chain is Developmental and secondary metabolism regulator veA (561 aa).

3 disordered regions span residues 1–23 (MANR…RITR), 41–60 (ARAC…VDPP), and 258–361 (AYAR…PQGI). Over residues 12-23 (NETEHSVSRITR) the composition is skewed to basic and acidic residues. In terms of domain architecture, Velvet spans 25-233 (GKQLTYKLSV…AEQGCRVRIR (209 aa)). Residues 39–44 (ERARAC) carry the Nuclear localization signal motif. Positions 258 to 268 (AYARSSDRFTT) are enriched in basic and acidic residues. Over residues 324–339 (SHSQTPSYQSHLSFGS) the composition is skewed to polar residues. Residues 347-357 (PHMPPTPPPVA) show a composition bias toward pro residues. The tract at residues 438-485 (RPQTPNLPAMPPPKPLSNDYANHVVPSVECTSPGGSGGGGYDNVRGKR) is PEST. Residues 491-524 (GPTYGKRSHEDTFGLDDRSMQNGMRPDTEPYPAY) form a disordered region. Positions 497–509 (RSHEDTFGLDDRS) are enriched in basic and acidic residues.

Belongs to the velvet family. VeA subfamily. In terms of assembly, component of the heterotrimeric velvet complex composed of laeA, veA and velB; velA acting as a bridging protein between laeA and velB. Interacts with kapA. Interacts with vosA and velc.

Its subcellular location is the nucleus. The protein resides in the cytoplasm. Its function is as follows. Component of the velvet transcription factor complex that controls sexual/asexual developmental ratio in response to light, promoting sexual development in the darkness while stimulating asexual sporulation under illumination. The velvet complex acts as a global regulator for secondary metabolite gene expression. Controls the expression of the penicillin gene cluster. Positively controls the expression of the class V chitinase chiB1. Positively controls the expression of the transcription factor atfA. Required for cell wall integrity and controls hyphal branching. This is Developmental and secondary metabolism regulator veA from Penicillium rubens (strain ATCC 28089 / DSM 1075 / NRRL 1951 / Wisconsin 54-1255) (Penicillium chrysogenum).